We begin with the raw amino-acid sequence, 560 residues long: Interferon alpha/beta receptor 1 (560 aa).

Positions 1–24 are cleaved as a signal peptide; the sequence is MLGLLGATTLMLVAGAPWVLPAGG. Over 25 to 437 the chain is Extracellular; sequence ADLRSPENVV…EKTKPGSTSQ (413 aa). Fibronectin type-III domains lie at 29–125, 133–224, 231–329, and 333–433; these read SPEN…FQEA, HLEA…INTT, SPEN…TEMQ, and FPPV…TKPG. Asn-55 carries N-linked (GlcNAc...) asparagine glycosylation. Cys-76 and Cys-84 are disulfide-bonded. Asn-85, Asn-108, and Asn-172 each carry an N-linked (GlcNAc...) asparagine glycan. A disulfide bond links Cys-199 and Cys-220. Residues Asn-222, Asn-249, and Asn-254 are each glycosylated (N-linked (GlcNAc...) asparagine). Cys-283 and Cys-291 are joined by a disulfide. N-linked (GlcNAc...) asparagine glycosylation is found at Asn-313, Asn-377, and Asn-417. A disulfide bond links Cys-404 and Cys-427. The chain crosses the membrane as a helical span at residues 438-458; it reads AWLIAGILSAILLFPAVFYGV. Residues 459-560 lie on the Cytoplasmic side of the membrane; that stretch reads KVVSRCINYV…GEEILRQAAV (102 aa). Cys-464 carries the S-palmitoyl cysteine lipid modification. Tyr-467 and Tyr-482 each carry phosphotyrosine; by TYK2. The segment at 492-501 is important for interaction with TYK2; it reads LLSTSEEQTE. Residues Ser-496 and Ser-536 each carry the phosphoserine modification. The interval 520-560 is disordered; that stretch reads QIDDNHSRCSSQTNRDSGVYSNEDENSGSKIGEEILRQAAV. Residues 527–539 are compositionally biased toward polar residues; the sequence is RCSSQTNRDSGVY. The segment covering 550-560 has biased composition (basic and acidic residues); sequence IGEEILRQAAV.

This sequence belongs to the type II cytokine receptor family. In terms of assembly, heterodimer with IFNAR2; forming the receptor for type I interferon. Interacts with TYK2. Interacts with STAT1 and STAT2; the interaction requires its phosphorylation at Tyr-482. Interacts (serine-phosphorylated form) with FBXW11, the substrate recognition component of a SCF (SKP1-CUL1-F-box protein) E3 ubiquitin-protein ligase complex. Interacts with SHMT2; this promotes interaction with ABRAXAS2 and the BRISC complex. Interacts with TRIM10; this interaction prevents association between IFNAR1 and TYK2. Ubiquitinated, leading to its internalization and degradation. Polyubiquitinated via 'Lys-48'-linked and 'Lys-63'-linked ubiquitin chains, leading to receptor internalization and lysosomal degradation. The 'Lys-63'-linked ubiquitin chains are cleaved off by the BRISC complex. In terms of processing, phosphorylated on tyrosine residues in response to interferon-binding: phosphorylation by TYK2 tyrosine kinase creates docking sites for STAT proteins. Phosphorylated on serine residues in response to interferon binding; this promotes interaction with FBXW11 and ubiquitination. Post-translationally, palmitoylation at Cys-464 is required for the activation of STAT1 and STAT2.

It localises to the cell membrane. It is found in the late endosome. Its subcellular location is the lysosome. Functionally, together with IFNAR2, forms the heterodimeric receptor for type I interferons (including interferons alpha, beta, epsilon, omega and kappa). Type I interferon binding activates the JAK-STAT signaling cascade, resulting in transcriptional activation or repression of interferon-regulated genes that encode the effectors of the interferon response. Mechanistically, type I interferon-binding brings the IFNAR1 and IFNAR2 subunits into close proximity with one another, driving their associated Janus kinases (JAKs) (TYK2 bound to IFNAR1 and JAK1 bound to IFNAR2) to cross-phosphorylate one another. The activated kinases phosphorylate specific tyrosine residues on the intracellular domains of IFNAR1 and IFNAR2, forming docking sites for the STAT transcription factors. STAT proteins are then phosphorylated by the JAKs, promoting their translocation into the nucleus to regulate expression of interferon-regulated genes. Can also act independently of IFNAR2: form an active IFNB1 receptor by itself and activate a signaling cascade that does not involve activation of the JAK-STAT pathway. The chain is Interferon alpha/beta receptor 1 (IFNAR1) from Sus scrofa (Pig).